Reading from the N-terminus, the 222-residue chain is Triosephosphate isomerase (222 aa).

9-11 (NYK) contributes to the substrate binding site. Residue His93 is the Electrophile of the active site. The active-site Proton acceptor is the Glu141. Substrate is bound by residues Ile146, Gly181, and 202-203 (AS).

Belongs to the triosephosphate isomerase family. Homotetramer; dimer of dimers.

The protein resides in the cytoplasm. It catalyses the reaction D-glyceraldehyde 3-phosphate = dihydroxyacetone phosphate. It functions in the pathway carbohydrate biosynthesis; gluconeogenesis. Its pathway is carbohydrate degradation; glycolysis; D-glyceraldehyde 3-phosphate from glycerone phosphate: step 1/1. Involved in the gluconeogenesis. Catalyzes stereospecifically the conversion of dihydroxyacetone phosphate (DHAP) to D-glyceraldehyde-3-phosphate (G3P). In Methanosarcina barkeri (strain Fusaro / DSM 804), this protein is Triosephosphate isomerase.